Reading from the N-terminus, the 95-residue chain is MKITREQVEHVARLARLELSEAELDTFTGQMDSILSYVEKLNALDTEGIVPTSHAVPMENAFRADEATGSIGVEAALANAPLRAQSFFRVPKVIE.

The protein belongs to the GatC family. In terms of assembly, heterotrimer of A, B and C subunits.

The enzyme catalyses L-glutamyl-tRNA(Gln) + L-glutamine + ATP + H2O = L-glutaminyl-tRNA(Gln) + L-glutamate + ADP + phosphate + H(+). The catalysed reaction is L-aspartyl-tRNA(Asn) + L-glutamine + ATP + H2O = L-asparaginyl-tRNA(Asn) + L-glutamate + ADP + phosphate + 2 H(+). Allows the formation of correctly charged Asn-tRNA(Asn) or Gln-tRNA(Gln) through the transamidation of misacylated Asp-tRNA(Asn) or Glu-tRNA(Gln) in organisms which lack either or both of asparaginyl-tRNA or glutaminyl-tRNA synthetases. The reaction takes place in the presence of glutamine and ATP through an activated phospho-Asp-tRNA(Asn) or phospho-Glu-tRNA(Gln). This chain is Aspartyl/glutamyl-tRNA(Asn/Gln) amidotransferase subunit C, found in Citrifermentans bemidjiense (strain ATCC BAA-1014 / DSM 16622 / JCM 12645 / Bem) (Geobacter bemidjiensis).